The primary structure comprises 475 residues: Aspartyl/glutamyl-tRNA(Asn/Gln) amidotransferase subunit B (475 aa).

The protein belongs to the GatB/GatE family. GatB subfamily. As to quaternary structure, heterotrimer of A, B and C subunits.

The enzyme catalyses L-glutamyl-tRNA(Gln) + L-glutamine + ATP + H2O = L-glutaminyl-tRNA(Gln) + L-glutamate + ADP + phosphate + H(+). The catalysed reaction is L-aspartyl-tRNA(Asn) + L-glutamine + ATP + H2O = L-asparaginyl-tRNA(Asn) + L-glutamate + ADP + phosphate + 2 H(+). Allows the formation of correctly charged Asn-tRNA(Asn) or Gln-tRNA(Gln) through the transamidation of misacylated Asp-tRNA(Asn) or Glu-tRNA(Gln) in organisms which lack either or both of asparaginyl-tRNA or glutaminyl-tRNA synthetases. The reaction takes place in the presence of glutamine and ATP through an activated phospho-Asp-tRNA(Asn) or phospho-Glu-tRNA(Gln). In Staphylococcus aureus (strain COL), this protein is Aspartyl/glutamyl-tRNA(Asn/Gln) amidotransferase subunit B.